The primary structure comprises 172 residues: Adenine phosphoribosyltransferase (172 aa).

It belongs to the purine/pyrimidine phosphoribosyltransferase family. Homodimer.

It localises to the cytoplasm. The enzyme catalyses AMP + diphosphate = 5-phospho-alpha-D-ribose 1-diphosphate + adenine. Its pathway is purine metabolism; AMP biosynthesis via salvage pathway; AMP from adenine: step 1/1. Its function is as follows. Catalyzes a salvage reaction resulting in the formation of AMP, that is energically less costly than de novo synthesis. This is Adenine phosphoribosyltransferase from Staphylococcus carnosus (strain TM300).